A 177-amino-acid chain; its full sequence is Large ribosomal subunit protein uL6 (177 aa).

The protein belongs to the universal ribosomal protein uL6 family. In terms of assembly, part of the 50S ribosomal subunit.

Functionally, this protein binds to the 23S rRNA, and is important in its secondary structure. It is located near the subunit interface in the base of the L7/L12 stalk, and near the tRNA binding site of the peptidyltransferase center. This is Large ribosomal subunit protein uL6 from Polynucleobacter necessarius subsp. necessarius (strain STIR1).